Consider the following 214-residue polypeptide: Thymidylate kinase (214 aa).

9–16 (GIEGCGKT) serves as a coordination point for ATP.

Belongs to the thymidylate kinase family.

The catalysed reaction is dTMP + ATP = dTDP + ADP. Phosphorylation of dTMP to form dTDP in both de novo and salvage pathways of dTTP synthesis. The sequence is that of Thymidylate kinase from Geotalea daltonii (strain DSM 22248 / JCM 15807 / FRC-32) (Geobacter daltonii).